The primary structure comprises 894 residues: LRR receptor-like serine/threonine-protein kinase IOS1 (894 aa).

An N-terminal signal peptide occupies residues 1 to 23; it reads MAFSSCFLLVLLQIFSALLLCLA. The Extracellular segment spans residues 24–515; it reads QDQSGFISLD…KKKKNTVIAP (492 aa). Residues N48, N95, N137, N179, N223, N230, N260, N287, N309, N338, N399, N441, N462, and N469 are each glycosylated (N-linked (GlcNAc...) asparagine). 2 LRR repeats span residues 431-457 and 459-479; these read LTSLEVLDLSNNSLTGSVPEFLANMET and KLINLSGNELNGSIPATLLDK. The chain crosses the membrane as a helical span at residues 516-536; it reads VAASLVSVFLIGAGIVTFLIL. Residues 537-894 lie on the Cytoplasmic side of the membrane; that stretch reads KRKKRTKLGL…FTTELNPGAR (358 aa). A Phosphothreonine modification is found at T577. A Protein kinase domain is found at 586–858; the sequence is NNFERVLGRG…QVVMDLKECL (273 aa). ATP is bound by residues 592-600 and K613; that span reads LGRGGFGVV. Y658 is subject to Phosphotyrosine. D710 functions as the Proton acceptor in the catalytic mechanism. S744 bears the Phosphoserine mark. Phosphothreonine occurs at positions 745 and 750. Y758 carries the post-translational modification Phosphotyrosine.

The protein belongs to the protein kinase superfamily. Ser/Thr protein kinase family. In terms of assembly, homodimerization. Interacts with BAK1 and FLS2; triggers FLS2-BAK1 complex formation upon microbe-associated molecular patterns (MAMPs) treatment. Also binds to CERK1 and EFR. In terms of tissue distribution, expressed in roots, cotyledons, leaves, flowers and siliques.

It localises to the cell membrane. In terms of biological role, negatively regulates the abscisic acid (ABA) signaling pathway. Required for full susceptibility to filamentous (hemi)biotrophic oomycetes (e.g. H.arabidopsidis and P.parasitica) and fungal (e.g. E.cruciferarum) pathogens, probably by triggering the repression of ABA-sensitive COLD REGULATED and RESISTANCE TO DESICCATION genes during infection, but independently of immune responses. Involved in BAK1-dependent and BAK1-independent microbe-associated molecular patterns (MAMPs)-triggered immunity (PTI) leading to defense responses, including callose deposition and MAPK cascade activation, toward pathogenic bacteria (e.g. P.syringae). Required for chitin-mediated PTI. The protein is LRR receptor-like serine/threonine-protein kinase IOS1 of Arabidopsis thaliana (Mouse-ear cress).